The following is a 377-amino-acid chain: Queuine tRNA-ribosyltransferase (377 aa).

Asp-89 serves as the catalytic Proton acceptor. Residues 89 to 93 (DSGGF), Asp-143, Gln-188, and Gly-215 each bind substrate. The interval 246-252 (GVGKPED) is RNA binding. Residue Asp-265 is the Nucleophile of the active site. Residues 270–274 (TRNAR) form an RNA binding; important for wobble base 34 recognition region. Positions 303, 305, 308, and 334 each coordinate Zn(2+).

Belongs to the queuine tRNA-ribosyltransferase family. Homodimer. Within each dimer, one monomer is responsible for RNA recognition and catalysis, while the other monomer binds to the replacement base PreQ1. Zn(2+) serves as cofactor.

It carries out the reaction 7-aminomethyl-7-carbaguanine + guanosine(34) in tRNA = 7-aminomethyl-7-carbaguanosine(34) in tRNA + guanine. It participates in tRNA modification; tRNA-queuosine biosynthesis. Functionally, catalyzes the base-exchange of a guanine (G) residue with the queuine precursor 7-aminomethyl-7-deazaguanine (PreQ1) at position 34 (anticodon wobble position) in tRNAs with GU(N) anticodons (tRNA-Asp, -Asn, -His and -Tyr). Catalysis occurs through a double-displacement mechanism. The nucleophile active site attacks the C1' of nucleotide 34 to detach the guanine base from the RNA, forming a covalent enzyme-RNA intermediate. The proton acceptor active site deprotonates the incoming PreQ1, allowing a nucleophilic attack on the C1' of the ribose to form the product. After dissociation, two additional enzymatic reactions on the tRNA convert PreQ1 to queuine (Q), resulting in the hypermodified nucleoside queuosine (7-(((4,5-cis-dihydroxy-2-cyclopenten-1-yl)amino)methyl)-7-deazaguanosine). The sequence is that of Queuine tRNA-ribosyltransferase from Acinetobacter baumannii (strain AB307-0294).